Consider the following 71-residue polypeptide: Small ribosomal subunit protein bS18 (71 aa).

It belongs to the bacterial ribosomal protein bS18 family. In terms of assembly, part of the 30S ribosomal subunit. Forms a tight heterodimer with protein bS6.

Binds as a heterodimer with protein bS6 to the central domain of the 16S rRNA, where it helps stabilize the platform of the 30S subunit. This chain is Small ribosomal subunit protein bS18, found in Thermosynechococcus vestitus (strain NIES-2133 / IAM M-273 / BP-1).